Reading from the N-terminus, the 418-residue chain is Serine hydroxymethyltransferase (418 aa).

Residues L121 and 125 to 127 (GHL) each bind (6S)-5,6,7,8-tetrahydrofolate. K230 is subject to N6-(pyridoxal phosphate)lysine. 355-357 (SPF) contributes to the (6S)-5,6,7,8-tetrahydrofolate binding site.

The protein belongs to the SHMT family. Homodimer. Pyridoxal 5'-phosphate is required as a cofactor.

The protein resides in the cytoplasm. The catalysed reaction is (6R)-5,10-methylene-5,6,7,8-tetrahydrofolate + glycine + H2O = (6S)-5,6,7,8-tetrahydrofolate + L-serine. It functions in the pathway one-carbon metabolism; tetrahydrofolate interconversion. It participates in amino-acid biosynthesis; glycine biosynthesis; glycine from L-serine: step 1/1. Catalyzes the reversible interconversion of serine and glycine with tetrahydrofolate (THF) serving as the one-carbon carrier. This reaction serves as the major source of one-carbon groups required for the biosynthesis of purines, thymidylate, methionine, and other important biomolecules. Also exhibits THF-independent aldolase activity toward beta-hydroxyamino acids, producing glycine and aldehydes, via a retro-aldol mechanism. The chain is Serine hydroxymethyltransferase from Streptococcus pyogenes serotype M6 (strain ATCC BAA-946 / MGAS10394).